The sequence spans 417 residues: Serine hydroxymethyltransferase (417 aa).

(6S)-5,6,7,8-tetrahydrofolate is bound by residues Leu-121 and 125 to 127 (GHL). Lys-229 is subject to N6-(pyridoxal phosphate)lysine. 355-357 (SPF) is a (6S)-5,6,7,8-tetrahydrofolate binding site.

Belongs to the SHMT family. As to quaternary structure, homodimer. The cofactor is pyridoxal 5'-phosphate.

The protein localises to the cytoplasm. It carries out the reaction (6R)-5,10-methylene-5,6,7,8-tetrahydrofolate + glycine + H2O = (6S)-5,6,7,8-tetrahydrofolate + L-serine. It participates in one-carbon metabolism; tetrahydrofolate interconversion. The protein operates within amino-acid biosynthesis; glycine biosynthesis; glycine from L-serine: step 1/1. Functionally, catalyzes the reversible interconversion of serine and glycine with tetrahydrofolate (THF) serving as the one-carbon carrier. This reaction serves as the major source of one-carbon groups required for the biosynthesis of purines, thymidylate, methionine, and other important biomolecules. Also exhibits THF-independent aldolase activity toward beta-hydroxyamino acids, producing glycine and aldehydes, via a retro-aldol mechanism. This is Serine hydroxymethyltransferase from Shewanella baltica (strain OS155 / ATCC BAA-1091).